The chain runs to 395 residues: General transcription factor IIH subunit 2 (395 aa).

A VWFA domain is found at H60–V236. Y95 carries the phosphotyrosine modification. Residues C291–C308 form a C4-type zinc finger.

It belongs to the GTF2H2 family. As to quaternary structure, component of the TFIID-containing RNA polymerase II pre-initiation complex that is composed of TBP and at least GTF2A1, GTF2A2, GTF2E1, GTF2E2, GTF2F1, GTF2H2, GTF2H3, GTF2H4, GTF2H5, GTF2B, TCEA1, ERCC2 and ERCC3. Component of the 7-subunit TFIIH core complex composed of XPB/ERCC3, XPD/ERCC2, GTF2H1, GTF2H2, GTF2H3, GTF2H4 and GTF2H5, which is active in NER. The core complex associates with the 3-subunit CDK-activating kinase (CAK) module composed of CCNH/cyclin H, CDK7 and MNAT1 to form the 10-subunit holoenzyme (holo-TFIIH) active in transcription. Interacts with XPB, XPD, GTF2H1 and GTF2H3. In terms of assembly, (Microbial infection) Interacts with varicella-zoster virus IE63 protein. Widely expressed, with higher expression in skeletal muscle.

It localises to the nucleus. In terms of biological role, component of the general transcription and DNA repair factor IIH (TFIIH) core complex, which is involved in general and transcription-coupled nucleotide excision repair (NER) of damaged DNA and, when complexed to CAK, in RNA transcription by RNA polymerase II. In NER, TFIIH acts by opening DNA around the lesion to allow the excision of the damaged oligonucleotide and its replacement by a new DNA fragment. In transcription, TFIIH has an essential role in transcription initiation. When the pre-initiation complex (PIC) has been established, TFIIH is required for promoter opening and promoter escape. Phosphorylation of the C-terminal tail (CTD) of the largest subunit of RNA polymerase II by the kinase module CAK controls the initiation of transcription. The N-terminus of GTF2H2 interacts with and regulates XPD whereas an intact C-terminus is required for a successful escape of RNAP II form the promoter. The sequence is that of General transcription factor IIH subunit 2 (GTF2H2) from Homo sapiens (Human).